Here is a 1408-residue protein sequence, read N- to C-terminus: Palladin (1408 aa).

The tract at residues 69-229 (SKSPISLCET…SASQSPTADQ (161 aa)) is disordered. 2 stretches are compositionally biased toward polar residues: residues 149–169 (PNPS…QSQL) and 193–229 (RSPN…TADQ). Ser-194 carries the post-translational modification Phosphoserine. 2 Ig-like C2-type domains span residues 278–367 (PRFI…AEVF) and 448–546 (PVFT…LVIT). 2 disulfides stabilise this stretch: Cys-299-Cys-351 and Cys-469-Cys-528. The interval 569–573 (FPPPP) is interaction with VASP. Disordered regions lie at residues 631-660 (NGKA…LAKP) and 687-727 (PPGV…VPSE). Ser-639 bears the Phosphoserine mark. Residue Thr-642 is modified to Phosphothreonine. Ser-648 is subject to Phosphoserine. The tract at residues 653–683 (PPPLLAKPKLDPLKLQQLQNQVRLEQEACAW) is interaction with LASP1. Residues 683–713 (WPPAPPGVPCNSSSSGSSAPPSPPFPPPPPA) are interaction with SORBS2, SPIN90 and SRC. A compositionally biased stretch (low complexity) spans 691–701 (PCNSSSSGSSA). Residues Ser-700, Ser-704, and Ser-744 each carry the phosphoserine modification. Pro residues predominate over residues 702-714 (PPSPPFPPPPPAF). 3 disordered regions span residues 758–854 (NLGP…RFGP), 882–904 (KGVT…SDEE), and 960–981 (ETAA…LDGQ). Positions 765 to 779 (LPTPTSSPSSSSLPS) are enriched in low complexity. 3 stretches are compositionally biased toward pro residues: residues 780 to 797 (PLSP…PPFV), 807 to 818 (SPSPPPPPPPVF), and 828 to 840 (DVFP…PPLP). An interaction with EPS8 region spans residues 782–842 (SPTPRPFGRA…PPPPPPLPSS (61 aa)). The interaction with SORBS2, SPIN90, SRC and PFN1 stretch occupies residues 807–842 (SPSPPPPPPPVFSPSAAYPVPDVFPLPPPPPPLPSS). An interaction with VASP region spans residues 830 to 834 (FPLPP). A Phosphoserine modification is found at Ser-901. A phosphoserine mark is found at Ser-1004 and Ser-1009. In terms of domain architecture, Ig-like C2-type 3 spans 1026–1110 (PFFEMKLKHY…MAANPQGRVS (85 aa)). Positions 1121-1150 (NQRGRSPRSPSGHPHARRPRSRSRDSGDEN) are disordered. Residues 1123 to 1133 (RGRSPRSPSGH) are compositionally biased toward low complexity. Phosphoserine is present on residues Ser-1126, Ser-1129, Ser-1131, and Ser-1141. Phosphoserine; by PKB/AKT1 is present on Ser-1143. Ser-1146 bears the Phosphoserine mark. Ig-like C2-type domains lie at 1160-1251 (PHFL…LVVA) and 1259-1349 (PVFM…ARLD). Interaction with EZR stretches follow at residues 1162-1251 (FLQA…LVVA) and 1261-1351 (FMEK…LDVY). Cys-1181 and Cys-1233 are disulfide-bonded. Ser-1377 is modified (phosphoserine).

This sequence belongs to the myotilin/palladin family. Interacts with EPS8. Interacts with LASP1. Interacts with VASP. Interacts with ACTN. Interacts with SORBS2. Interacts with PFN1. Interacts with LPP. Interacts with SPIN90. Interacts with SRC. Interacts with EZR. Interacts with RAI14. In terms of processing, phosphorylated predominantly on serines and, to a lesser extent, on tyrosines. Phosphorylation at Ser-1143 by PKB/AKT1 modulates cytoskeletal organization and cell motility. In terms of tissue distribution, detected in both muscle and non-muscle tissues and cells (at protein level). Isoform 3 is widely expressed, isoform 4 is particularly abundant in tissues rich in smooth muscle and in the cardiac muscle and isoform 1 is detected in heart.

It localises to the cytoplasm. The protein resides in the cytoskeleton. Its subcellular location is the cell junction. The protein localises to the focal adhesion. It is found in the myofibril. It localises to the sarcomere. The protein resides in the z line. Its subcellular location is the cell projection. The protein localises to the ruffle. It is found in the podosome. It localises to the lamellipodium. The protein resides in the axon. Its subcellular location is the growth cone. Cytoskeletal protein required for organization of normal actin cytoskeleton. Roles in establishing cell morphology, motility, cell adhesion and cell-extracellular matrix interactions in a variety of cell types. May function as a scaffolding molecule with the potential to influence both actin polymerization and the assembly of existing actin filaments into higher-order arrays. Binds to proteins that bind to either monomeric or filamentous actin. Localizes at sites where active actin remodeling takes place, such as lamellipodia and membrane ruffles. Different isoforms may have functional differences. Involved in the control of morphological and cytoskeletal changes associated with dendritic cell maturation. Involved in targeting ACTN to specific subcellular locations. May be required for the initiation of neural tube closure. The protein is Palladin (Palld) of Mus musculus (Mouse).